Here is a 201-residue protein sequence, read N- to C-terminus: dTTP/UTP pyrophosphatase (201 aa).

Asp81 functions as the Proton acceptor in the catalytic mechanism.

It belongs to the Maf family. YhdE subfamily. A divalent metal cation is required as a cofactor.

The protein localises to the cytoplasm. It carries out the reaction dTTP + H2O = dTMP + diphosphate + H(+). The enzyme catalyses UTP + H2O = UMP + diphosphate + H(+). In terms of biological role, nucleoside triphosphate pyrophosphatase that hydrolyzes dTTP and UTP. May have a dual role in cell division arrest and in preventing the incorporation of modified nucleotides into cellular nucleic acids. This is dTTP/UTP pyrophosphatase from Bordetella avium (strain 197N).